A 263-amino-acid chain; its full sequence is Methylesterase 2 (263 aa).

Serine 85 serves as the catalytic Acyl-ester intermediate. Catalysis depends on charge relay system residues aspartate 213 and histidine 241.

Belongs to the AB hydrolase superfamily. Methylesterase family.

The enzyme catalyses methyl (indol-3-yl)acetate + H2O = (indol-3-yl)acetate + methanol + H(+). It catalyses the reaction methyl (-)-jasmonate + H2O = jasmonate + methanol + H(+). It carries out the reaction methyl salicylate + H2O = salicylate + methanol + H(+). The protein operates within plant hormone biosynthesis. Its pathway is lipid metabolism; oxylipin biosynthesis. Its activity is regulated as follows. Esterase activity is down-regulated by salicylic acid (SA). Down-regulated by agrochemicals Paraoxon, 3,4-DCl and Profenofos. Methylesterase shown to have carboxylesterase activity, methyl indole-3-acetic acid (MeIAA) esterase activity, methyl salicylate (MeSA) esterase activity and methyl jasmonate (MeJA) esterase activity in vitro. This is Methylesterase 2 from Arabidopsis thaliana (Mouse-ear cress).